The following is a 326-amino-acid chain: MMSSRTRKIYLFVFMFISTSLQLMNGEAKAEPETFRQFLYNKQKGTVLGRTGTSWCQITVFYIIFYIFLSAFFIGCLAIFLKTLDPKVPRFYGKGTIIGVNPGVGYQPWLKENPDSTLIKFNLQDSKSWEPYVKQLDGYFSRYNNTNDTRECGAEDSNEALQTDPDSLPCRFDLGLFEKANCGAKDQYGFKSGKPCVVVSLNRLIGWRPVDYDGNSVPEEIKSRYKSGSITINCEGATPFDKEHLGKVKYIPEAGIDGRYYPYVFLPSYQQPIAMVKFDTIPRNKLVIVECRAYASNIEHDVSTRIGMVYFELFVEDKKPVAAPAA.

Residues 1-59 (MMSSRTRKIYLFVFMFISTSLQLMNGEAKAEPETFRQFLYNKQKGTVLGRTGTSWCQIT) are Cytoplasmic-facing. A helical; Signal-anchor for type II membrane protein membrane pass occupies residues 60–80 (VFYIIFYIFLSAFFIGCLAIF). At 81-326 (LKTLDPKVPR…DKKPVAAPAA (246 aa)) the chain is on the lumenal side. N-linked (GlcNAc...) asparagine glycans are attached at residues N144 and N147. C234 and C291 are joined by a disulfide.

The protein belongs to the X(+)/potassium ATPases subunit beta family. In terms of assembly, the sodium/potassium-transporting ATPase is composed of a catalytic alpha subunit, an auxiliary non-catalytic beta subunit and an additional regulatory subunit.

The protein resides in the cell membrane. Its function is as follows. This is the non-catalytic component of the active enzyme, which catalyzes the hydrolysis of ATP coupled with the exchange of Na(+) and K(+) ions across the plasma membrane. The beta subunit regulates, through assembly of alpha/beta heterodimers, the number of sodium pumps transported to the plasma membrane. Implicated in genomic response to various soil bacteria that affects fitness, lifespan and brood size. The chain is Probable sodium/potassium-transporting ATPase subunit beta-3 (nkb-3) from Caenorhabditis briggsae.